A 256-amino-acid polypeptide reads, in one-letter code: Pimeloyl-[acyl-carrier protein] methyl ester esterase (256 aa).

The AB hydrolase-1 domain occupies 15-242 (HLVLLHGWGL…AAHAPFISHP (228 aa)). Residues Trp22, 82–83 (SL), and 143–147 (FLALQ) each bind substrate. The Nucleophile role is filled by Ser82. Active-site residues include Asp207 and His235. His235 contacts substrate.

This sequence belongs to the AB hydrolase superfamily. Carboxylesterase BioH family. Monomer.

Its subcellular location is the cytoplasm. The catalysed reaction is 6-carboxyhexanoyl-[ACP] methyl ester + H2O = 6-carboxyhexanoyl-[ACP] + methanol + H(+). It participates in cofactor biosynthesis; biotin biosynthesis. Functionally, the physiological role of BioH is to remove the methyl group introduced by BioC when the pimeloyl moiety is complete. It allows to synthesize pimeloyl-ACP via the fatty acid synthetic pathway through the hydrolysis of the ester bonds of pimeloyl-ACP esters. This Escherichia coli O139:H28 (strain E24377A / ETEC) protein is Pimeloyl-[acyl-carrier protein] methyl ester esterase.